Here is a 335-residue protein sequence, read N- to C-terminus: Taste receptor type 2 member 119 (335 aa).

The Extracellular portion of the chain corresponds to 1 to 7 (MMEGHML). The helical transmembrane segment at 8–28 (FFLLVVVVQFLTGVLANGLIV) threads the bilayer. At 29–43 (VVNAIDLIMWKKMAP) the chain is on the cytoplasmic side. The helical transmembrane segment at 44 to 64 (LDLLLFCLATSRIILQLCILF) threads the bilayer. The Extracellular segment spans residues 65 to 81 (AQLGLSCLVRHTLFADN). Residue Asn81 is glycosylated (N-linked (GlcNAc...) asparagine). A helical transmembrane segment spans residues 82-102 (VTFVYIINELSLWFATWLGVF). Residues 103–124 (YCAKIATIPHPLFLWLKMRISR) lie on the Cytoplasmic side of the membrane. The chain crosses the membrane as a helical span at residues 125 to 145 (LVPWLILASVVYVTVTTFIHS). The Extracellular portion of the chain corresponds to 146–176 (RETSELPKQIFISFFSKNTTRVRPAHATLLS). The N-linked (GlcNAc...) asparagine glycan is linked to Asn163. A helical membrane pass occupies residues 177–197 (VFVFGLTLPFLIFTVAVLLLL). Topologically, residues 198 to 224 (SSLWNHSRQMRTMVGTREPSRHALVSA) are cytoplasmic. A helical transmembrane segment spans residues 225–245 (MLSILSFLILYLSHDMVAVLI). The Extracellular portion of the chain corresponds to 246-256 (CTQGLHFGSRT). A helical membrane pass occupies residues 257-277 (FAFCLLVIGMYPSLHSIVLIL). The Cytoplasmic portion of the chain corresponds to 278–335 (GNPKLKRNAKTFIVHCKCCHCARAWVTSRNPRLSDLPVPATHHSANKTSCSEACIMPS).

The protein belongs to the G-protein coupled receptor T2R family. As to expression, expressed in subsets of taste receptor cells of the tongue and palate epithelium and exclusively in gustducin-positive cells. Expressed in 15% taste bud cells in circumvallate and foliate papillae but only in 2% in fungiform papillae. Expressed in the gastro and duodenal tissue. Not expressed in colon, liver, heart and kidney.

Its subcellular location is the membrane. In terms of biological role, gustducin-coupled receptor implicated in the perception of bitter compounds in the oral cavity and the gastrointestinal tract. Signals through PLCB2 and the calcium-regulated cation channel TRPM5. The chain is Taste receptor type 2 member 119 (Tas2r119) from Mus musculus (Mouse).